The primary structure comprises 208 residues: Small ribosomal subunit protein uS4 (208 aa).

Residues lysine 30–lysine 49 form a disordered region. The S4 RNA-binding domain occupies arginine 98–leucine 161.

The protein belongs to the universal ribosomal protein uS4 family. As to quaternary structure, part of the 30S ribosomal subunit. Contacts protein S5. The interaction surface between S4 and S5 is involved in control of translational fidelity.

In terms of biological role, one of the primary rRNA binding proteins, it binds directly to 16S rRNA where it nucleates assembly of the body of the 30S subunit. Functionally, with S5 and S12 plays an important role in translational accuracy. The protein is Small ribosomal subunit protein uS4 of Nitratiruptor sp. (strain SB155-2).